The primary structure comprises 834 residues: ATP-dependent 6-phosphofructokinase (834 aa).

Residues 1–426 (MTTTSKIIND…FYEIFIACSN (426 aa)) form an N-terminal catalytic PFK domain 1 region. ATP-binding positions include glycine 62, 123-124 (RS), and 153-156 (GDGS). Aspartate 154 is a Mg(2+) binding site. Residues 199-201 (SID), arginine 236, 243-245 (MGR), glutamate 299, arginine 326, and 332-335 (HVQR) each bind substrate. Residue aspartate 201 is the Proton acceptor of the active site. The interval 427–437 (LHRRKVESKGM) is interdomain linker. Residues 438–834 (GVLILHSGGP…DPNVNPQFTL (397 aa)) are C-terminal regulatory PFK domain 2. Residues arginine 507, 566-570 (TIANN), arginine 603, 610-612 (MGA), glutamate 666, arginine 692, 698-701 (HLQQ), and arginine 764 each bind beta-D-fructose 2,6-bisphosphate. Residues 799–834 (SNLSEQDRPIKKSDISSPTSYSQKTFDPNVNPQFTL) are disordered. The span at 803–812 (EQDRPIKKSD) shows a compositional bias: basic and acidic residues. Residues 813-834 (ISSPTSYSQKTFDPNVNPQFTL) show a composition bias toward polar residues.

It belongs to the phosphofructokinase type A (PFKA) family. ATP-dependent PFK group I subfamily. Eukaryotic two domain clade 'E' sub-subfamily. In terms of assembly, homotetramer. Mg(2+) is required as a cofactor. The N-terminus is blocked.

It localises to the cytoplasm. It carries out the reaction beta-D-fructose 6-phosphate + ATP = beta-D-fructose 1,6-bisphosphate + ADP + H(+). It functions in the pathway carbohydrate degradation; glycolysis; D-glyceraldehyde 3-phosphate and glycerone phosphate from D-glucose: step 3/4. Allosterically activated by ADP, AMP, or fructose 2,6-bisphosphate, and allosterically inhibited by ATP or citrate. Catalyzes the phosphorylation of D-fructose 6-phosphate to fructose 1,6-bisphosphate by ATP, the first committing step of glycolysis. In Dictyostelium discoideum (Social amoeba), this protein is ATP-dependent 6-phosphofructokinase (pfkA).